Consider the following 416-residue polypeptide: Serine hydroxymethyltransferase (416 aa).

Residues Leu-121 and 125–127 (GHL) contribute to the (6S)-5,6,7,8-tetrahydrofolate site. At Lys-229 the chain carries N6-(pyridoxal phosphate)lysine.

It belongs to the SHMT family. As to quaternary structure, homodimer. The cofactor is pyridoxal 5'-phosphate.

Its subcellular location is the cytoplasm. It carries out the reaction (6R)-5,10-methylene-5,6,7,8-tetrahydrofolate + glycine + H2O = (6S)-5,6,7,8-tetrahydrofolate + L-serine. It functions in the pathway one-carbon metabolism; tetrahydrofolate interconversion. It participates in amino-acid biosynthesis; glycine biosynthesis; glycine from L-serine: step 1/1. Catalyzes the reversible interconversion of serine and glycine with tetrahydrofolate (THF) serving as the one-carbon carrier. This reaction serves as the major source of one-carbon groups required for the biosynthesis of purines, thymidylate, methionine, and other important biomolecules. Also exhibits THF-independent aldolase activity toward beta-hydroxyamino acids, producing glycine and aldehydes, via a retro-aldol mechanism. The sequence is that of Serine hydroxymethyltransferase from Dechloromonas aromatica (strain RCB).